We begin with the raw amino-acid sequence, 103 residues long: Large ribosomal subunit protein bL21 (103 aa).

It belongs to the bacterial ribosomal protein bL21 family. As to quaternary structure, part of the 50S ribosomal subunit. Contacts protein L20.

This protein binds to 23S rRNA in the presence of protein L20. The sequence is that of Large ribosomal subunit protein bL21 from Actinobacillus pleuropneumoniae serotype 5b (strain L20).